The chain runs to 433 residues: Histidinol dehydrogenase homolog (433 aa).

2 residues coordinate Zn(2+): Q249 and H252. Active-site proton acceptor residues include E319 and H320. Zn(2+) is bound by residues D353 and H412.

Belongs to the histidinol dehydrogenase family. Zn(2+) is required as a cofactor.

The chain is Histidinol dehydrogenase homolog from Ruegeria pomeroyi (strain ATCC 700808 / DSM 15171 / DSS-3) (Silicibacter pomeroyi).